The following is an 85-amino-acid chain: Small ribosomal subunit protein bS18 (85 aa).

This sequence belongs to the bacterial ribosomal protein bS18 family. As to quaternary structure, part of the 30S ribosomal subunit. Forms a tight heterodimer with protein bS6.

Binds as a heterodimer with protein bS6 to the central domain of the 16S rRNA, where it helps stabilize the platform of the 30S subunit. This is Small ribosomal subunit protein bS18 from Hamiltonella defensa subsp. Acyrthosiphon pisum (strain 5AT).